Here is a 466-residue protein sequence, read N- to C-terminus: Putative proline/betaine transporter (466 aa).

Transmembrane regions (helical) follow at residues 20 to 42 (VVAT…YTTA), 63 to 83 (FAAL…FGII), 91 to 111 (VVLT…GLLP), 116 to 136 (IGLW…FSTG), 164 to 184 (IGTL…TFFL), 191 to 211 (SFGW…GLYL), 239 to 259 (IIRF…FFNV), 285 to 305 (VLIT…GKLA), 313 to 332 (VFLI…FMLL), 337 to 354 (FVVI…LSTY), 377 to 397 (VTFN…ATWL), and 405 to 425 (LAPA…ITFL).

Belongs to the major facilitator superfamily. Metabolite:H+ Symporter (MHS) family (TC 2.A.1.6) family.

It is found in the cell membrane. Functionally, may be a proton symporter involved in the uptake of osmolytes such as proline and glycine betaine. This is Putative proline/betaine transporter (proP) from Staphylococcus aureus (strain MSSA476).